The following is a 239-amino-acid chain: uncharacterized protein (239 aa).

Residues 1 to 19 (MPLLHRTIIFLQLLGTISS) form the signal peptide. 9 N-linked (GlcNAc...) asparagine glycosylation sites follow: N44, N58, N72, N92, N109, N136, N172, N192, and N213.

The protein localises to the secreted. This is an uncharacterized protein from Caenorhabditis elegans.